A 206-amino-acid chain; its full sequence is MPKIDLFNQNGEKVGDLQLADSVFGVEVNTYAMHQVVKALLANKRQGTQSAKTRAEVSGGGIKPWRQKGTGRARQGSIRAPQWIHGGIVFAPKPRDYRMSIPKSMKKVAMKSALTSKVNEKLMVVVDDIKLETPKTKEVVKMLNSFDAKKTLIITNNAEENVYKSARNIEGVQIIPVNNINVYDLLKYDKVVITKDAVSKIEEVYA.

Positions 47 to 76 (GTQSAKTRAEVSGGGIKPWRQKGTGRARQG) are disordered.

This sequence belongs to the universal ribosomal protein uL4 family. Part of the 50S ribosomal subunit.

In terms of biological role, one of the primary rRNA binding proteins, this protein initially binds near the 5'-end of the 23S rRNA. It is important during the early stages of 50S assembly. It makes multiple contacts with different domains of the 23S rRNA in the assembled 50S subunit and ribosome. Forms part of the polypeptide exit tunnel. In Clostridium botulinum (strain Okra / Type B1), this protein is Large ribosomal subunit protein uL4.